A 480-amino-acid chain; its full sequence is Chromosomal replication initiator protein DnaA (480 aa).

The interval 1–71 is domain I, interacts with DnaA modulators; that stretch reads MNLTKVWNTT…REQLGSVVGF (71 aa). A domain II region spans residues 71-139; it reads FPVDVRIVLA…LELHRAVRSS (69 aa). Positions 91 to 115 are disordered; the sequence is SINGRHAARDTRKSDHHAPLSGGYG. The span at 97–108 shows a compositional bias: basic and acidic residues; sequence AARDTRKSDHHA. Positions 140–356 are domain III, AAA+ region; it reads MLNPRYTFDR…GCLNRVTAYA (217 aa). Positions 184, 186, 187, and 188 each coordinate ATP. The segment at 357 to 480 is domain IV, binds dsDNA; it reads QMYNIPVTIE…IRERLMNSAV (124 aa).

Belongs to the DnaA family. As to quaternary structure, oligomerizes as a right-handed, spiral filament on DNA at oriC.

The protein localises to the cytoplasm. In terms of biological role, plays an essential role in the initiation and regulation of chromosomal replication. ATP-DnaA binds to the origin of replication (oriC) to initiate formation of the DNA replication initiation complex once per cell cycle. Binds the DnaA box (a 9 base pair repeat at the origin) and separates the double-stranded (ds)DNA. Forms a right-handed helical filament on oriC DNA; dsDNA binds to the exterior of the filament while single-stranded (ss)DNA is stabiized in the filament's interior. The ATP-DnaA-oriC complex binds and stabilizes one strand of the AT-rich DNA unwinding element (DUE), permitting loading of DNA polymerase. After initiation quickly degrades to an ADP-DnaA complex that is not apt for DNA replication. Binds acidic phospholipids. The protein is Chromosomal replication initiator protein DnaA of Roseiflexus castenholzii (strain DSM 13941 / HLO8).